The sequence spans 555 residues: Urocanate hydratase (555 aa).

Residues 52–53 (GG), Q130, 176–178 (GMG), E196, R201, 242–243 (NA), 263–267 (QTSAH), 273–274 (YL), and Y322 contribute to the NAD(+) site. Residue C410 is part of the active site. G492 is a binding site for NAD(+).

Belongs to the urocanase family. NAD(+) serves as cofactor.

The protein resides in the cytoplasm. The enzyme catalyses 4-imidazolone-5-propanoate = trans-urocanate + H2O. It functions in the pathway amino-acid degradation; L-histidine degradation into L-glutamate; N-formimidoyl-L-glutamate from L-histidine: step 2/3. Functionally, catalyzes the conversion of urocanate to 4-imidazolone-5-propionate. This is Urocanate hydratase from Shewanella sp. (strain W3-18-1).